Reading from the N-terminus, the 388-residue chain is Alcohol dehydrogenase-like 1 (388 aa).

Zn(2+) is bound by residues C53, T55, H76, C106, C109, C112, C120, and C185. An alcohol is bound by residues T55 and H76. Residue T55 participates in NAD(+) binding. NAD(+) contacts are provided by residues 210-215 (GLGAVG), D234, K239, 304-306 (LGM), F331, and R381.

The protein belongs to the zinc-containing alcohol dehydrogenase family. Class-III subfamily. Homodimer. Requires Zn(2+) as cofactor.

It localises to the cytoplasm. The enzyme catalyses a primary alcohol + NAD(+) = an aldehyde + NADH + H(+). It carries out the reaction a secondary alcohol + NAD(+) = a ketone + NADH + H(+). The polypeptide is Alcohol dehydrogenase-like 1 (Arabidopsis thaliana (Mouse-ear cress)).